Consider the following 520-residue polypeptide: GMP synthase [glutamine-hydrolyzing] (520 aa).

The 191-residue stretch at 12 to 202 (KIIVLDFGSQ…AFDVCGCTGD (191 aa)) folds into the Glutamine amidotransferase type-1 domain. Cysteine 89 functions as the Nucleophile in the catalytic mechanism. Catalysis depends on residues histidine 176 and glutamate 178. A GMPS ATP-PPase domain is found at 203 to 395 (WSMENFIDME…LGMPDAIVWR (193 aa)). Residue 230 to 236 (SGGVDSS) participates in ATP binding.

In terms of assembly, homodimer.

It carries out the reaction XMP + L-glutamine + ATP + H2O = GMP + L-glutamate + AMP + diphosphate + 2 H(+). It functions in the pathway purine metabolism; GMP biosynthesis; GMP from XMP (L-Gln route): step 1/1. Functionally, catalyzes the synthesis of GMP from XMP. In Enterococcus faecalis (strain ATCC 700802 / V583), this protein is GMP synthase [glutamine-hydrolyzing].